Consider the following 369-residue polypeptide: Protein DUF642 L-GALACTONO-1,4-LACTONE-RESPONSIVE GENE 2 (369 aa).

Positions 1 to 19 (MEGVTVVSFFLLFIATAMA) are cleaved as a signal peptide. Asn125 carries N-linked (GlcNAc...) asparagine glycosylation.

Expressed in roots, seedlings and leaves.

Its subcellular location is the secreted. It localises to the cell wall. Its function is as follows. Involved in the regulation of testa rupture during seed germination. Required during roots and rosettes development. This is Protein DUF642 L-GALACTONO-1,4-LACTONE-RESPONSIVE GENE 2 from Arabidopsis thaliana (Mouse-ear cress).